A 439-amino-acid chain; its full sequence is Cell division protein DivIB (439 aa).

2 disordered regions span residues 1–96 and 119–149; these read MDDK…DSNI and DNEQPQSAPKEQNSDSIDEETVTKKERKSKV. Topologically, residues 1–173 are cytoplasmic; sequence MDDKTKNDQQ…RRKRQKRIQY (173 aa). A compositionally biased stretch (acidic residues) spans 11 to 20; the sequence is ESNEDKDELE. Residues 26 to 38 are compositionally biased toward basic residues; that stretch reads TSKKRRQRKRSKA. The segment covering 64 to 76 has biased composition (basic and acidic residues); it reads KDFKKEESNDKNN. The segment covering 77 to 86 has biased composition (low complexity); that stretch reads DSASSHANDN. A compositionally biased stretch (acidic residues) spans 87 to 96; it reads NIDDSTDSNI. The span at 119–133 shows a compositional bias: polar residues; sequence DNEQPQSAPKEQNSD. The chain crosses the membrane as a helical span at residues 174–194; the sequence is SVITILVLLIAVILIYMFSPL. The POTRA domain occupies 195–263; it reads SKIAHVNING…NTLNVDITEN (69 aa). The Extracellular segment spans residues 195-439; that stretch reads SKIAHVNING…KINKQSSKNN (245 aa). The interval 396–439 is disordered; sequence YRGNTSSQSESDKNVTKSSQEENQAKEELQSVLNKINKQSSKNN. The span at 405-424 shows a compositional bias: basic and acidic residues; it reads ESDKNVTKSSQEENQAKEEL. Over residues 426 to 439 the composition is skewed to polar residues; that stretch reads SVLNKINKQSSKNN.

Belongs to the FtsQ/DivIB family. DivIB subfamily.

The protein resides in the cell membrane. Its function is as follows. Cell division protein that may be involved in stabilizing or promoting the assembly of the division complex. This chain is Cell division protein DivIB, found in Staphylococcus aureus (strain NCTC 8325 / PS 47).